The chain runs to 253 residues: Probable transcriptional regulatory protein slr0989 (253 aa).

The interval 1–22 (MGGRKWQSIKRQKARVDAQKGK) is disordered.

Belongs to the TACO1 family.

It localises to the cytoplasm. The protein is Probable transcriptional regulatory protein slr0989 of Synechocystis sp. (strain ATCC 27184 / PCC 6803 / Kazusa).